A 507-amino-acid polypeptide reads, in one-letter code: Putative histone deacetylase 2 (507 aa).

The histone deacetylase stretch occupies residues arginine 29–glycine 342. Histidine 162 is an active-site residue. Residues glutamate 444–proline 507 form a disordered region. Residues serine 482–leucine 501 are compositionally biased toward basic and acidic residues.

This sequence belongs to the histone deacetylase family. HD type 1 subfamily. As to quaternary structure, may be a component of a histone deacetylase complex containing saeg-2, saeg-1 and hda-2.

The protein resides in the nucleus. The enzyme catalyses N(6)-acetyl-L-lysyl-[histone] + H2O = L-lysyl-[histone] + acetate. Functionally, probably responsible for the deacetylation of lysine residues on the N-terminal part of the core histones (H2A, H2B, H3 and H4). Histone deacetylation gives a tag for epigenetic repression and plays an important role in transcriptional regulation, cell cycle progression and developmental events. Histone deacetylases act via the formation of large multiprotein complexes. As a likely component of a histone deacetylase complex, together with saeg-1 and hda-2, functions downstream of the cAMP-dependent kinase egl-4 to regulate the expression of genes required for egg-laying and forgaging. This is Putative histone deacetylase 2 (hda-2) from Caenorhabditis elegans.